A 400-amino-acid chain; its full sequence is Argininosuccinate synthase (400 aa).

Residues 11–19 (AYSGGLDTS) and Ala-38 each bind ATP. 2 residues coordinate L-citrulline: Tyr-89 and Ser-94. Residue Gly-119 coordinates ATP. The L-aspartate site is built by Thr-121, Asn-125, and Asp-126. Asn-125 contacts L-citrulline. Residues Arg-129, Ser-179, Ser-188, Glu-264, and Tyr-276 each coordinate L-citrulline.

The protein belongs to the argininosuccinate synthase family. Type 1 subfamily. As to quaternary structure, homotetramer.

Its subcellular location is the cytoplasm. The catalysed reaction is L-citrulline + L-aspartate + ATP = 2-(N(omega)-L-arginino)succinate + AMP + diphosphate + H(+). It functions in the pathway amino-acid biosynthesis; L-arginine biosynthesis; L-arginine from L-ornithine and carbamoyl phosphate: step 2/3. The chain is Argininosuccinate synthase from Oleidesulfovibrio alaskensis (strain ATCC BAA-1058 / DSM 17464 / G20) (Desulfovibrio alaskensis).